The primary structure comprises 495 residues: Cysteine--tRNA ligase (495 aa).

C35 provides a ligand contact to Zn(2+). The short motif at P37–N47 is the 'HIGH' region element. Positions 230, 255, and 259 each coordinate Zn(2+). The 'KMSKS' region signature appears at K287–S291. Residue K290 participates in ATP binding.

The protein belongs to the class-I aminoacyl-tRNA synthetase family. Monomer. It depends on Zn(2+) as a cofactor.

It localises to the cytoplasm. The enzyme catalyses tRNA(Cys) + L-cysteine + ATP = L-cysteinyl-tRNA(Cys) + AMP + diphosphate. This is Cysteine--tRNA ligase from Flavobacterium psychrophilum (strain ATCC 49511 / DSM 21280 / CIP 103535 / JIP02/86).